A 410-amino-acid polypeptide reads, in one-letter code: Peptidase T (410 aa).

Residue H79 participates in Zn(2+) binding. The active site involves D81. D142 contributes to the Zn(2+) binding site. E176 functions as the Proton acceptor in the catalytic mechanism. Positions 177, 199, and 381 each coordinate Zn(2+).

Belongs to the peptidase M20B family. Requires Zn(2+) as cofactor.

It is found in the cytoplasm. The enzyme catalyses Release of the N-terminal residue from a tripeptide.. Functionally, cleaves the N-terminal amino acid of tripeptides. This is Peptidase T from Listeria monocytogenes serotype 4a (strain HCC23).